A 1295-amino-acid polypeptide reads, in one-letter code: Phosphoribosylformylglycinamidine synthase (1295 aa).

Positions 305–327 (WPGAATGSGGEIRDEGATGRGAK) are disordered. Residues 307 to 318 (GAATGSGGEIRD), 386 to 388 (TGY), and A678 contribute to the ATP site. Mg(2+) is bound by residues D679, E718, N722, and D884. S886 is an ATP binding site. Positions 1042–1295 (VAVLREQGVN…IFRNARKQLG (254 aa)) constitute a Glutamine amidotransferase type-1 domain. The active-site Nucleophile is C1135. Residues H1260 and E1262 contribute to the active site.

The protein in the N-terminal section; belongs to the FGAMS family. In terms of assembly, monomer.

It localises to the cytoplasm. The enzyme catalyses N(2)-formyl-N(1)-(5-phospho-beta-D-ribosyl)glycinamide + L-glutamine + ATP + H2O = 2-formamido-N(1)-(5-O-phospho-beta-D-ribosyl)acetamidine + L-glutamate + ADP + phosphate + H(+). It participates in purine metabolism; IMP biosynthesis via de novo pathway; 5-amino-1-(5-phospho-D-ribosyl)imidazole from N(2)-formyl-N(1)-(5-phospho-D-ribosyl)glycinamide: step 1/2. Its function is as follows. Phosphoribosylformylglycinamidine synthase involved in the purines biosynthetic pathway. Catalyzes the ATP-dependent conversion of formylglycinamide ribonucleotide (FGAR) and glutamine to yield formylglycinamidine ribonucleotide (FGAM) and glutamate. This Salmonella typhimurium (strain LT2 / SGSC1412 / ATCC 700720) protein is Phosphoribosylformylglycinamidine synthase.